A 350-amino-acid chain; its full sequence is Phosphoribosylformylglycinamidine cyclo-ligase (350 aa).

It belongs to the AIR synthase family.

Its subcellular location is the cytoplasm. It catalyses the reaction 2-formamido-N(1)-(5-O-phospho-beta-D-ribosyl)acetamidine + ATP = 5-amino-1-(5-phospho-beta-D-ribosyl)imidazole + ADP + phosphate + H(+). It participates in purine metabolism; IMP biosynthesis via de novo pathway; 5-amino-1-(5-phospho-D-ribosyl)imidazole from N(2)-formyl-N(1)-(5-phospho-D-ribosyl)glycinamide: step 2/2. This chain is Phosphoribosylformylglycinamidine cyclo-ligase, found in Cupriavidus pinatubonensis (strain JMP 134 / LMG 1197) (Cupriavidus necator (strain JMP 134)).